The following is a 246-amino-acid chain: UDP-N-acetyl-D-mannosaminuronic acid transferase (246 aa).

The protein belongs to the glycosyltransferase 26 family.

The enzyme catalyses UDP-N-acetyl-alpha-D-mannosaminouronate + N-acetyl-alpha-D-glucosaminyl-di-trans,octa-cis-undecaprenyl diphosphate = beta-D-ManNAcA-(1-&gt;4)-alpha-D-GlcNAc-di-trans,octa-cis-undecaprenyl diphosphate + UDP + H(+). The protein operates within bacterial outer membrane biogenesis; enterobacterial common antigen biosynthesis. Catalyzes the synthesis of Und-PP-GlcNAc-ManNAcA (Lipid II), the second lipid-linked intermediate involved in enterobacterial common antigen (ECA) synthesis. The polypeptide is UDP-N-acetyl-D-mannosaminuronic acid transferase (Yersinia pseudotuberculosis serotype IB (strain PB1/+)).